Reading from the N-terminus, the 427-residue chain is Type II methyltransferase M1.BsuMI (427 aa).

Positions 84–427 constitute an SAM-dependent MTase C5-type domain; the sequence is INIADLFSGC…SYLLALHQLR (344 aa). Cys-176 is a catalytic residue.

Belongs to the class I-like SAM-binding methyltransferase superfamily. C5-methyltransferase family. Monomer. May form a complex with YdiP, also seems to be active alone.

The catalysed reaction is a 2'-deoxycytidine in DNA + S-adenosyl-L-methionine = a 5-methyl-2'-deoxycytidine in DNA + S-adenosyl-L-homocysteine + H(+). With respect to regulation, somewhat inhibited by MgCl(2) and spermidine, strongly inhibited by MnCl(2). Its function is as follows. A methylase, recognizes the double-stranded sequence 5'-YTCGAR-3', methylates C-3 on both strands, and protects the DNA from cleavage by the BsuMI endonuclease. The polypeptide is Type II methyltransferase M1.BsuMI (ydiO) (Bacillus subtilis (strain 168)).